A 349-amino-acid polypeptide reads, in one-letter code: Cell adhesion molecule CEACAM8 (349 aa).

Residues 1-34 form the signal peptide; sequence MGPISAPSCRWRIPWQGLLLTASLFTFWNPPTTA. Positions 35-142 constitute an Ig-like V-type domain; that stretch reads QLTIEAVPSN…EVTGQFSVHP (108 aa). Residues Asn-104, Asn-111, Asn-115, Asn-152, Asn-173, Asn-197, Asn-224, Asn-256, Asn-274, Asn-288, and Asn-309 are each glycosylated (N-linked (GlcNAc...) asparagine). 2 consecutive Ig-like C2-type domains span residues 145 to 232 and 237 to 319; these read PKPS…VTLN and PDAP…ITVS. Cys-167 and Cys-215 are joined by a disulfide. Residues Cys-259 and Cys-299 are joined by a disulfide bond. A lipid anchor (GPI-anchor amidated aspartate) is attached at Asp-320. Residues 321–349 constitute a propeptide, removed in mature form; the sequence is ALVQGSSPGLSARATVSIMIGVLARVALI.

The protein belongs to the immunoglobulin superfamily. CEA family. Monomer. Heterodimer with CEACAM6; heterodimerizes via its Ig-like V-type domain. Post-translationally, glycosylated. Expressed in leukocytes of chronic myeloid Leukemia patients and bone marrow.

It is found in the cell membrane. It localises to the cell surface. In terms of biological role, cell surface glycoprotein that plays a role in cell adhesion in a calcium-independent manner. Mediates heterophilic cell adhesion with other carcinoembryonic antigen-related cell adhesion molecules, such as CEACAM6. Heterophilic interaction with CEACAM8 occurs in activated neutrophils. The protein is Cell adhesion molecule CEACAM8 of Homo sapiens (Human).